A 526-amino-acid polypeptide reads, in one-letter code: Aspartate ammonia-lyase (526 aa).

The disordered stretch occupies residues M1–R44. The segment covering A10 to D20 has biased composition (basic and acidic residues). Positions G24–A39 are enriched in polar residues. L-aspartate-binding residues include T155, S194, T195, N196, and T241. The interval G371–N380 is SS loop. Catalysis depends on S372, which acts as the Proton acceptor. The L-aspartate site is built by S373 and K378.

This sequence belongs to the class-II fumarase/aspartase family. Aspartase subfamily. Homotetramer.

It catalyses the reaction L-aspartate = fumarate + NH4(+). Catalyzes the reversible conversion of L-aspartate to fumarate and ammonia. The polypeptide is Aspartate ammonia-lyase (Corynebacterium glutamicum (strain ATCC 13032 / DSM 20300 / JCM 1318 / BCRC 11384 / CCUG 27702 / LMG 3730 / NBRC 12168 / NCIMB 10025 / NRRL B-2784 / 534)).